The sequence spans 95 residues: Probable FAD-linked sulfhydryl oxidase OPG072 (95 aa).

Topologically, residues 1–8 are intravirion; sequence MNPKHWGR. Residues 1–95 enclose the ERV/ALR sulfhydryl oxidase domain; that stretch reads MNPKHWGRAV…AIDVTKVNPL (95 aa). The helical transmembrane segment at 9 to 25 threads the bilayer; that stretch reads AVWTIIFIVLSQAGLDG. Residues 26–95 are Virion surface-facing; it reads NIEACKRKLY…AIDVTKVNPL (70 aa). Cys43 and Cys46 are oxidised to a cystine.

Belongs to the orthopoxvirus OPG072 family. As to quaternary structure, interacts with OPG128/A2.5; this interaction involves formation of a transient disulfide-bonded intermediate, allowing disulfide bond transfer. The cofactor is FAD.

The protein localises to the virion membrane. The protein resides in the host cytoplasm. The enzyme catalyses 2 R'C(R)SH + O2 = R'C(R)S-S(R)CR' + H2O2. Its function is as follows. FAD-dependent sulfhydryl oxidase that catalyzes disulfide bond formation. The complete pathway for formation of disulfide bonds in intracellular virion membrane proteins sequentially involves thiol-disulfide transfer between OPG072/E10, OPG128/A2.5 and OPG088/G4. The chain is Probable FAD-linked sulfhydryl oxidase OPG072 (OPG072) from Bos taurus (Bovine).